The sequence spans 100 residues: Small ribosomal subunit protein uS14c (100 aa).

It belongs to the universal ribosomal protein uS14 family. As to quaternary structure, part of the 30S ribosomal subunit.

It is found in the plastid. The protein localises to the chloroplast. In terms of biological role, binds 16S rRNA, required for the assembly of 30S particles. The sequence is that of Small ribosomal subunit protein uS14c from Chloranthus spicatus (Chulantree).